Consider the following 228-residue polypeptide: MPAFFVTGTDTEIGKTTIAAGLLHAARSAGLSTAAAKPVASGCEPTAQGLRNGDALVLLGQCSLALAYEQVNPLAFAPAIAPHLAAREAGVELSAARLHEAVREVLALQADFTLVEGAGGWRVPLLGRENLSDLARLLALPVVLVVGVRLGCINHALLSAEAILGDGLALVGWVANVVDPATSRLEENLATLAERLPAPCLGRVPRLEEATPAAVAAHLDLRPLGIGL.

12–17 provides a ligand contact to ATP; sequence EIGKTT. Thr-16 contributes to the Mg(2+) binding site. The active site involves Lys-37. Ser-41 contacts substrate. ATP contacts are provided by residues Asp-54, 116-119, and 205-207; these read EGAG and PRL. Residues Asp-54 and Glu-116 each coordinate Mg(2+).

Belongs to the dethiobiotin synthetase family. In terms of assembly, homodimer. It depends on Mg(2+) as a cofactor.

Its subcellular location is the cytoplasm. It carries out the reaction (7R,8S)-7,8-diammoniononanoate + CO2 + ATP = (4R,5S)-dethiobiotin + ADP + phosphate + 3 H(+). The protein operates within cofactor biosynthesis; biotin biosynthesis; biotin from 7,8-diaminononanoate: step 1/2. In terms of biological role, catalyzes a mechanistically unusual reaction, the ATP-dependent insertion of CO2 between the N7 and N8 nitrogen atoms of 7,8-diaminopelargonic acid (DAPA, also called 7,8-diammoniononanoate) to form a ureido ring. This is ATP-dependent dethiobiotin synthetase BioD from Pseudomonas aeruginosa (strain LESB58).